The chain runs to 223 residues: Probable tRNA-splicing endonuclease subunit tsp-1 (223 aa).

The interval 1–55 (MESGSTPPTDKQIRENEQDGTGHQGKLLARPTSTRQQQQQQQQQPSHSVSQSVSQ) is disordered. Over residues 30–55 (RPTSTRQQQQQQQQQPSHSVSQSVSQ) the composition is skewed to low complexity.

It belongs to the SEN15 family. In terms of assembly, tRNA splicing endonuclease is a heterotetramer composed of tsp-2/sen2, tsp-1/sen15, tsp-4/sen34 and tsp-5/sen54. Interacts directly with tsp-4/sen34.

In terms of biological role, non-catalytic subunit of the tRNA-splicing endonuclease complex, a complex responsible for identification and cleavage of the splice sites in pre-tRNA. It cleaves pre-tRNA at the 5' and 3' splice sites to release the intron. The products are an intron and two tRNA half-molecules bearing 2',3' cyclic phosphate and 5'-OH termini. There are no conserved sequences at the splice sites, but the intron is invariably located at the same site in the gene, placing the splice sites an invariant distance from the constant structural features of the tRNA body. This chain is Probable tRNA-splicing endonuclease subunit tsp-1 (tsp-1), found in Neurospora crassa (strain ATCC 24698 / 74-OR23-1A / CBS 708.71 / DSM 1257 / FGSC 987).